We begin with the raw amino-acid sequence, 335 residues long: MPRRYLLDFEKPLVELEKQIEQIRELARDSEVDVSQQLLQLETLATRRREEIFRSLTPAQKIQVARHPQRPSTLDFIQMFCDDWIELHGDRNGGDDMALIGGLGSVNNQPVLLLGHQKGRDTKENVVRNFGMAKPGGYRKALRLMQHADRFSLPILTFIDTPGAYAGLSAEEQGQGEAIARNLREMFGFKVPIIATIIGEGGSGGALGIGVADRLLMFEHSVYTVASPEACASILWRDAAKASEAATALKITGKDLLELGVIDEVLSEPAGGNNWAPIEAGNTLKGAIEKHLNELLELKKEELLEQRYSKFRVLGKFVESNNFEEIQEQLPQITE.

The CoA carboxyltransferase C-terminal domain maps to 40–294 (QLETLATRRR…KGAIEKHLNE (255 aa)).

This sequence belongs to the AccA family. Acetyl-CoA carboxylase is a heterohexamer composed of biotin carboxyl carrier protein (AccB), biotin carboxylase (AccC) and two subunits each of ACCase subunit alpha (AccA) and ACCase subunit beta (AccD).

The protein resides in the cytoplasm. The catalysed reaction is N(6)-carboxybiotinyl-L-lysyl-[protein] + acetyl-CoA = N(6)-biotinyl-L-lysyl-[protein] + malonyl-CoA. The protein operates within lipid metabolism; malonyl-CoA biosynthesis; malonyl-CoA from acetyl-CoA: step 1/1. Its function is as follows. Component of the acetyl coenzyme A carboxylase (ACC) complex. First, biotin carboxylase catalyzes the carboxylation of biotin on its carrier protein (BCCP) and then the CO(2) group is transferred by the carboxyltransferase to acetyl-CoA to form malonyl-CoA. The polypeptide is Acetyl-coenzyme A carboxylase carboxyl transferase subunit alpha (Prochlorococcus marinus subsp. pastoris (strain CCMP1986 / NIES-2087 / MED4)).